Consider the following 310-residue polypeptide: Methionyl-tRNA formyltransferase (310 aa).

109 to 112 (SLLP) is a (6S)-5,6,7,8-tetrahydrofolate binding site.

This sequence belongs to the Fmt family.

It catalyses the reaction L-methionyl-tRNA(fMet) + (6R)-10-formyltetrahydrofolate = N-formyl-L-methionyl-tRNA(fMet) + (6S)-5,6,7,8-tetrahydrofolate + H(+). Functionally, attaches a formyl group to the free amino group of methionyl-tRNA(fMet). The formyl group appears to play a dual role in the initiator identity of N-formylmethionyl-tRNA by promoting its recognition by IF2 and preventing the misappropriation of this tRNA by the elongation apparatus. This chain is Methionyl-tRNA formyltransferase, found in Pseudomonas putida (strain ATCC 700007 / DSM 6899 / JCM 31910 / BCRC 17059 / LMG 24140 / F1).